A 506-amino-acid polypeptide reads, in one-letter code: Chromosomal replication initiator protein DnaA (506 aa).

The tract at residues 1 to 87 (MSVELWQQCV…IGSRRSSAPR (87 aa)) is domain I, interacts with DnaA modulators. The domain II stretch occupies residues 87-169 (RAAPNAPVSA…QVEGALKHTS (83 aa)). The segment at 135-154 (DSFDAMAEPAAAPPSGGGRA) is disordered. Low complexity predominate over residues 139–148 (AMAEPAAAPP). Residues 170–386 (YLNRTFTFDT…GALKRVIAHS (217 aa)) form a domain III, AAA+ region region. 4 residues coordinate ATP: Gly214, Gly216, Lys217, and Thr218. The tract at residues 387–506 (HFMGRDITIE…YKNLLRTLTT (120 aa)) is domain IV, binds dsDNA.

Belongs to the DnaA family. Oligomerizes as a right-handed, spiral filament on DNA at oriC.

Its subcellular location is the cytoplasm. Plays an essential role in the initiation and regulation of chromosomal replication. ATP-DnaA binds to the origin of replication (oriC) to initiate formation of the DNA replication initiation complex once per cell cycle. Binds the DnaA box (a 9 base pair repeat at the origin) and separates the double-stranded (ds)DNA. Forms a right-handed helical filament on oriC DNA; dsDNA binds to the exterior of the filament while single-stranded (ss)DNA is stabiized in the filament's interior. The ATP-DnaA-oriC complex binds and stabilizes one strand of the AT-rich DNA unwinding element (DUE), permitting loading of DNA polymerase. After initiation quickly degrades to an ADP-DnaA complex that is not apt for DNA replication. Binds acidic phospholipids. Its function is as follows. Non-cooperatively binds DnaA boxes in the minimal plasmid RK2 replication origin (oriV). In vitro in the presence of plasmid RK2-derived TrfA and E.coli protein HU, forms an open complex at oriV. This complex was not however competent for formation of a pre-priming complex with E.coli DnaB and DnaC. Broad host range plasmid RK2 requires not only DnaA for replication but also TrfA and host factors. This chain is Chromosomal replication initiator protein DnaA, found in Pseudomonas putida (strain ATCC 47054 / DSM 6125 / CFBP 8728 / NCIMB 11950 / KT2440).